The following is a 457-amino-acid chain: Argininosuccinate lyase (457 aa).

This sequence belongs to the lyase 1 family. Argininosuccinate lyase subfamily.

The protein resides in the cytoplasm. It carries out the reaction 2-(N(omega)-L-arginino)succinate = fumarate + L-arginine. The protein operates within amino-acid biosynthesis; L-arginine biosynthesis; L-arginine from L-ornithine and carbamoyl phosphate: step 3/3. The chain is Argininosuccinate lyase from Pectobacterium atrosepticum (strain SCRI 1043 / ATCC BAA-672) (Erwinia carotovora subsp. atroseptica).